Consider the following 353-residue polypeptide: Chorismate synthase (353 aa).

Arg48 contacts NADP(+). Residues 128–130 (RAS), Gly280, 295–299 (KPIPS), and Arg321 contribute to the FMN site.

It belongs to the chorismate synthase family. As to quaternary structure, homotetramer. Requires FMNH2 as cofactor.

The enzyme catalyses 5-O-(1-carboxyvinyl)-3-phosphoshikimate = chorismate + phosphate. Its pathway is metabolic intermediate biosynthesis; chorismate biosynthesis; chorismate from D-erythrose 4-phosphate and phosphoenolpyruvate: step 7/7. Functionally, catalyzes the anti-1,4-elimination of the C-3 phosphate and the C-6 proR hydrogen from 5-enolpyruvylshikimate-3-phosphate (EPSP) to yield chorismate, which is the branch point compound that serves as the starting substrate for the three terminal pathways of aromatic amino acid biosynthesis. This reaction introduces a second double bond into the aromatic ring system. In Nitratidesulfovibrio vulgaris (strain DSM 19637 / Miyazaki F) (Desulfovibrio vulgaris), this protein is Chorismate synthase.